A 739-amino-acid polypeptide reads, in one-letter code: Phosphoribosylformylglycinamidine synthase subunit PurL (739 aa).

The active site involves H49. Positions 52 and 91 each coordinate ATP. Mg(2+) is bound at residue E93. Residues S94 to H97 and R116 each bind substrate. H95 serves as the catalytic Proton acceptor. Residue D117 coordinates Mg(2+). Residue Q240 coordinates substrate. D268 lines the Mg(2+) pocket. Residue E312 to Q314 participates in substrate binding. D493 and G530 together coordinate ATP. N531 provides a ligand contact to Mg(2+). S533 contributes to the substrate binding site.

This sequence belongs to the FGAMS family. In terms of assembly, monomer. Part of the FGAM synthase complex composed of 1 PurL, 1 PurQ and 2 PurS subunits.

It is found in the cytoplasm. It carries out the reaction N(2)-formyl-N(1)-(5-phospho-beta-D-ribosyl)glycinamide + L-glutamine + ATP + H2O = 2-formamido-N(1)-(5-O-phospho-beta-D-ribosyl)acetamidine + L-glutamate + ADP + phosphate + H(+). The protein operates within purine metabolism; IMP biosynthesis via de novo pathway; 5-amino-1-(5-phospho-D-ribosyl)imidazole from N(2)-formyl-N(1)-(5-phospho-D-ribosyl)glycinamide: step 1/2. Its function is as follows. Part of the phosphoribosylformylglycinamidine synthase complex involved in the purines biosynthetic pathway. Catalyzes the ATP-dependent conversion of formylglycinamide ribonucleotide (FGAR) and glutamine to yield formylglycinamidine ribonucleotide (FGAM) and glutamate. The FGAM synthase complex is composed of three subunits. PurQ produces an ammonia molecule by converting glutamine to glutamate. PurL transfers the ammonia molecule to FGAR to form FGAM in an ATP-dependent manner. PurS interacts with PurQ and PurL and is thought to assist in the transfer of the ammonia molecule from PurQ to PurL. The sequence is that of Phosphoribosylformylglycinamidine synthase subunit PurL from Parvibaculum lavamentivorans (strain DS-1 / DSM 13023 / NCIMB 13966).